We begin with the raw amino-acid sequence, 55 residues long: uncharacterized protein (55 aa).

Residues 27–44 traverse the membrane as a helical segment; sequence SFWFILISASSFLIYSLF.

Its subcellular location is the membrane. This is an uncharacterized protein from Dictyostelium discoideum (Social amoeba).